The following is a 404-amino-acid chain: Phosphopentomutase (404 aa).

The Mn(2+) site is built by Asp10, Asp303, His308, Asp344, His345, and His356.

This sequence belongs to the phosphopentomutase family. Mn(2+) serves as cofactor.

It localises to the cytoplasm. The catalysed reaction is 2-deoxy-alpha-D-ribose 1-phosphate = 2-deoxy-D-ribose 5-phosphate. It carries out the reaction alpha-D-ribose 1-phosphate = D-ribose 5-phosphate. It participates in carbohydrate degradation; 2-deoxy-D-ribose 1-phosphate degradation; D-glyceraldehyde 3-phosphate and acetaldehyde from 2-deoxy-alpha-D-ribose 1-phosphate: step 1/2. Isomerase that catalyzes the conversion of deoxy-ribose 1-phosphate (dRib-1-P) and ribose 1-phosphate (Rib-1-P) to deoxy-ribose 5-phosphate (dRib-5-P) and ribose 5-phosphate (Rib-5-P), respectively. This Shewanella oneidensis (strain ATCC 700550 / JCM 31522 / CIP 106686 / LMG 19005 / NCIMB 14063 / MR-1) protein is Phosphopentomutase.